The sequence spans 101 residues: Protein S100-A3 (101 aa).

2 EF-hand domains span residues 12–47 and 50–85; these read IVCT…TWTP and FREC…LCLY. Residue Lys-26 participates in Ca(2+) binding. An intrachain disulfide couples Cys-30 to Cys-68. Arg-51 is modified (citrulline; by PAD3). Ca(2+)-binding residues include Asp-63, Asn-65, Asp-67, Glu-69, and Glu-74. Residues Cys-83, Cys-86, His-87, and Cys-93 each coordinate Zn(2+).

This sequence belongs to the S-100 family. As to quaternary structure, homodimer and homotetramer for the citrullinated form. In terms of processing, more than half of the arginine residues undergo citrullination by PAD1 and PAD2. Arg-51 is specifically citrullinated by PAD3 and promotes tetramerization. In terms of tissue distribution, skin specific, specifically expressed in cuticle of pelage follicle.

The protein resides in the cytoplasm. Functionally, binds both calcium and zinc. May be involved in calcium-dependent cuticle cell differentiation, hair shaft and hair cuticular barrier formation. The protein is Protein S100-A3 (S100a3) of Mus musculus (Mouse).